Reading from the N-terminus, the 322-residue chain is Mas-related G-protein coupled receptor member X1 (322 aa).

The Extracellular portion of the chain corresponds to 1-30 (MDPTISSHDTESTPLNETGHPNCTPILTLS). N-linked (GlcNAc...) asparagine glycosylation is present at Asn16. A helical membrane pass occupies residues 31–51 (FLVLITTLVGLAGNTIVLWLL). At 52–59 (GFRMRRKA) the chain is on the cytoplasmic side. Residues 60–80 (ISVYILNLALADSFFLCCHFI) traverse the membrane as a helical segment. Topologically, residues 81 to 100 (DSLLRIIDFYGLYAHKLSKD) are extracellular. A helical membrane pass occupies residues 101–121 (ILGNAAIIPYISGLSILSAIS). The Cytoplasmic segment spans residues 122 to 142 (TERCLCVLWPIWYHCHRPRNM). A helical transmembrane segment spans residues 143–163 (SAIICALIWVLSFLMGILDWF). Topologically, residues 164–179 (SGFLGETHHHLWKNVD) are extracellular. Residues 180-200 (FIITAFLIFLFMLLSGSSLAL) form a helical membrane-spanning segment. The Cytoplasmic portion of the chain corresponds to 201–223 (LLRILCGPRRKPLSRLYVTIALT). Residues 224-244 (VMVYLICGLPLGLYLFLLYWF) traverse the membrane as a helical segment. Residues 245 to 257 (GVHLHYPFCHIYQ) are Extracellular-facing. Residues 258 to 278 (VTAVLSCVNSSANPIIYFLVG) traverse the membrane as a helical segment. The Cytoplasmic segment spans residues 279–322 (SFRQHRKHRSLKRVLKRALEDTPEEDEYTDSHLHKTTEISESRY).

The protein belongs to the G-protein coupled receptor 1 family. Mas subfamily. Expressed in a subset of IB4-positive small diameter nociceptive dorsal root neurons.

Its subcellular location is the cell membrane. Functionally, orphan receptor activated by neuropeptides terminating in Arg-Phe or Arg-Phe-amide. Mediates its action by association with G proteins that activate a phosphatidylinositol-calcium second messenger system. Its effect is mediated by G(q) and G(11) proteins. May regulate the function of nociceptive neurons by modulation of pain perception. In Mus musculus (Mouse), this protein is Mas-related G-protein coupled receptor member X1.